The chain runs to 498 residues: Oligopeptide transport system permease protein AmiC (498 aa).

6 helical membrane-spanning segments follow: residues 12–32 (SLVSIFLVTTLTYTIIYTLVP), 279–299 (MIVSSAITGLIGLVLAYALAV), 316–336 (LSTGALTFLLALPTIALVYIV), 359–379 (SYVLPAVILGLLGAPGTAIWI), 415–435 (MVPLVSGIPAAIIGVIGGATL), and 461–481 (VVGLVFIFTCISIFSRLLGDI). The region spanning 280-479 (IVSSAITGLI…CISIFSRLLG (200 aa)) is the ABC transmembrane type-1 domain.

This sequence belongs to the binding-protein-dependent transport system permease family. OppBC subfamily.

It is found in the cell membrane. Its function is as follows. Part of the binding-protein-dependent transport system for oligopeptides; probably responsible for the translocation of the substrate across the membrane. The chain is Oligopeptide transport system permease protein AmiC (amiC) from Streptococcus pneumoniae serotype 4 (strain ATCC BAA-334 / TIGR4).